A 349-amino-acid polypeptide reads, in one-letter code: Succinylglutamate desuccinylase (349 aa).

Residues histidine 70, glutamate 73, and histidine 166 each contribute to the Zn(2+) site. Glutamate 229 is a catalytic residue.

The protein belongs to the AspA/AstE family. Succinylglutamate desuccinylase subfamily. Requires Zn(2+) as cofactor.

It carries out the reaction N-succinyl-L-glutamate + H2O = L-glutamate + succinate. Its pathway is amino-acid degradation; L-arginine degradation via AST pathway; L-glutamate and succinate from L-arginine: step 5/5. Transforms N(2)-succinylglutamate into succinate and glutamate. The sequence is that of Succinylglutamate desuccinylase from Burkholderia pseudomallei (strain 1710b).